We begin with the raw amino-acid sequence, 176 residues long: Peptide deformylase (176 aa).

Residues cysteine 100 and histidine 142 each contribute to the Fe cation site. Glutamate 143 is a catalytic residue. Histidine 146 contacts Fe cation.

Belongs to the polypeptide deformylase family. Fe(2+) serves as cofactor.

The enzyme catalyses N-terminal N-formyl-L-methionyl-[peptide] + H2O = N-terminal L-methionyl-[peptide] + formate. In terms of biological role, removes the formyl group from the N-terminal Met of newly synthesized proteins. Requires at least a dipeptide for an efficient rate of reaction. N-terminal L-methionine is a prerequisite for activity but the enzyme has broad specificity at other positions. This chain is Peptide deformylase, found in Elusimicrobium minutum (strain Pei191).